The primary structure comprises 262 residues: Ribosomal RNA small subunit methyltransferase A (262 aa).

S-adenosyl-L-methionine contacts are provided by histidine 19, leucine 21, glycine 44, glutamate 65, aspartate 90, and asparagine 109. Positions 218–246 (LPNNLPGPLRERAEEALAGLGHGPDARAE) are disordered.

It belongs to the class I-like SAM-binding methyltransferase superfamily. rRNA adenine N(6)-methyltransferase family. RsmA subfamily.

Its subcellular location is the cytoplasm. It carries out the reaction adenosine(1518)/adenosine(1519) in 16S rRNA + 4 S-adenosyl-L-methionine = N(6)-dimethyladenosine(1518)/N(6)-dimethyladenosine(1519) in 16S rRNA + 4 S-adenosyl-L-homocysteine + 4 H(+). In terms of biological role, specifically dimethylates two adjacent adenosines (A1518 and A1519) in the loop of a conserved hairpin near the 3'-end of 16S rRNA in the 30S particle. May play a critical role in biogenesis of 30S subunits. This chain is Ribosomal RNA small subunit methyltransferase A, found in Rubrobacter xylanophilus (strain DSM 9941 / JCM 11954 / NBRC 16129 / PRD-1).